The following is a 513-amino-acid chain: MKISILLMFLWGLSCALPVTRYQNNESEDSEEWKGHLAQAPTPPLESSESSEGSKVSSEEQANEDPSDSTQSEEGLGSDDHQYIYRLAGGFSRSTGKGGDDKDDDEDDSGDDTFGDDDSGPGPKDRQEGGNSRLGSDEDSDDTIQASEESAPQGQDSAQDTTSESRELDNEDRVDSKPEGGDSTQESESEEHWVGGGSDGESSHGDGSELDDEGMQSDDPESIRSERGNSRMNSAGMKSKESGENSEQANTQDSGGSQLLEHPSRKIFRKSRISEEDDRSELDDNNTMEEVKSDSTENSNSRDTGLSQPRRDSKGDSQEDSKENLSQEESQNVDGPSSESSQEANLSSQENSSESQEEVVSESRGDNPDPTTSYVEDQEDSDSSEEDSSHTLSHSKSESREEQADSESSESLNFSEESPESPEDENSSSQEGLQSHSSSAESQSEESHSEEDDSDSQDSSRSKEDSNSTESKSSSEEDGQLKNIEIESRKLTVDAYHNKPIGDQDDNDCQDGY.

Residues 1–16 (MKISILLMFLWGLSCA) form the signal peptide. The interval 23 to 513 (QNNESEDSEE…QDDNDCQDGY (491 aa)) is disordered. Asn-25 carries N-linked (GlcNAc...) asparagine glycosylation. Residues 46 to 60 (ESSESSEGSKVSSEE) are compositionally biased toward low complexity. Positions 101 to 119 (DKDDDEDDSGDDTFGDDDS) are enriched in acidic residues. The segment covering 143–162 (TIQASEESAPQGQDSAQDTT) has biased composition (polar residues). Positions 163–180 (SESRELDNEDRVDSKPEG) are enriched in basic and acidic residues. A compositionally biased stretch (acidic residues) spans 208-220 (SELDDEGMQSDDP). Over residues 245–257 (NSEQANTQDSGGS) the composition is skewed to polar residues. Positions 275-287 (EEDDRSELDDNNT) are enriched in acidic residues. N-linked (GlcNAc...) asparagine glycosylation is present at Asn-285. Over residues 296 to 307 (TENSNSRDTGLS) the composition is skewed to polar residues. Residues 309–325 (PRRDSKGDSQEDSKENL) are compositionally biased toward basic and acidic residues. N-linked (GlcNAc...) asparagine glycosylation is found at Asn-324, Asn-345, and Asn-351. Residues 337–354 (SSESSQEANLSSQENSSE) are compositionally biased toward low complexity. The Cell attachment site motif lies at 364-366 (RGD). The span at 376–386 (EDQEDSDSSEE) shows a compositional bias: acidic residues. N-linked (GlcNAc...) asparagine glycosylation is found at Asn-413 and Asn-426. Residues 417–426 (ESPESPEDEN) are compositionally biased toward acidic residues. Residues 427–442 (SSSQEGLQSHSSSAES) are compositionally biased toward low complexity. Asn-467 carries an N-linked (GlcNAc...) asparagine glycan. Residues 484–502 (IEIESRKLTVDAYHNKPIG) are compositionally biased toward basic and acidic residues. Acidic residues predominate over residues 503–513 (DQDDNDCQDGY).

Interacts with importin alpha. Phosphorylated in the cytosol and extracellular matrix and unphosphorylated in the nucleus. Phosphorylation is necessary for nucleocytoplasmic transport and may be catalyzed by a nuclear isoform of CK2 and can be augmented by calcium. Phosphorylated (in vitro) by FAM20C in the extracellular medium at sites within the S-x-E/pS motif. As to expression, expressed in tooth particularly in odontoblast, ameloblast and cementoblast.

Its subcellular location is the nucleus. The protein resides in the cytoplasm. It localises to the secreted. It is found in the extracellular space. The protein localises to the extracellular matrix. Functionally, may have a dual function during osteoblast differentiation. In the nucleus of undifferentiated osteoblasts, unphosphorylated form acts as a transcriptional component for activation of osteoblast-specific genes like osteocalcin. During the osteoblast to osteocyte transition phase it is phosphorylated and exported into the extracellular matrix, where it regulates nucleation of hydroxyapatite. The polypeptide is Dentin matrix acidic phosphoprotein 1 (DMP1) (Homo sapiens (Human)).